Reading from the N-terminus, the 428-residue chain is Keratin, type I cytoskeletal 18-A (428 aa).

The interval 2 to 78 (SFRSQTSSTT…SVKGSGLFNN (77 aa)) is head. A coil 1A region spans residues 79–114 (EKETMQILNDRLASYLETVRNLEQANSKLELQIRET). The IF rod domain occupies 79–390 (EKETMQILND…RLLDGEDFRL (312 aa)). The tract at residues 115-131 (LEKRGPTTQDYSAYEKV) is linker 1. The segment at 132–223 (VEDLKSQIYD…RSHQTDVEEL (92 aa)) is coil 1B. The segment at 224-247 (RKHISECGVQVDVDAPKGQDLSKI) is linker 12. The coil 2 stretch occupies residues 248 to 385 (MEEIRAQYET…IATYRRLLDG (138 aa)). Residues 386-428 (EDFRLQDALAVQTTKVQKKITVTETVVDGKVVSQSSEVQEIKK) form a tail region.

Belongs to the intermediate filament family. In terms of assembly, heterotetramer of two type I and two type II keratins. Keratin-18 associates with keratin-8. In terms of processing, phosphorylated. Proteolytically cleaved by caspases during epithelial cell apoptosis.

In terms of biological role, when phosphorylated, plays a role in filament reorganization. The chain is Keratin, type I cytoskeletal 18-A from Polypterus senegalus (Senegal bichir).